The following is a 123-amino-acid chain: Small ribosomal subunit protein uS12cz/uS12cy (123 aa).

Belongs to the universal ribosomal protein uS12 family. As to quaternary structure, part of the 30S ribosomal subunit.

It is found in the plastid. The protein resides in the chloroplast. Functionally, with S4 and S5 plays an important role in translational accuracy. Located at the interface of the 30S and 50S subunits. This Psilotum nudum (Whisk fern) protein is Small ribosomal subunit protein uS12cz/uS12cy (rps12-A).